Reading from the N-terminus, the 503-residue chain is Cytochrome P450 3A43 (503 aa).

Position 442 (C442) interacts with heme.

The protein belongs to the cytochrome P450 family. Requires heme as cofactor. As to expression, highest expression level in prostate. Also expressed in liver, kidney, pancreas, fetal liver and fetal skeletal muscle.

It is found in the endoplasmic reticulum membrane. Its subcellular location is the microsome membrane. The enzyme catalyses an organic molecule + reduced [NADPH--hemoprotein reductase] + O2 = an alcohol + oxidized [NADPH--hemoprotein reductase] + H2O + H(+). Functionally, exhibits low testosterone 6-beta-hydroxylase activity. The protein is Cytochrome P450 3A43 (CYP3A43) of Homo sapiens (Human).